A 194-amino-acid polypeptide reads, in one-letter code: Ribose 1,5-bisphosphate phosphokinase PhnN (194 aa).

24 to 31 (GPSGAGKD) lines the ATP pocket.

This sequence belongs to the ribose 1,5-bisphosphokinase family.

The enzyme catalyses alpha-D-ribose 1,5-bisphosphate + ATP = 5-phospho-alpha-D-ribose 1-diphosphate + ADP. Its pathway is metabolic intermediate biosynthesis; 5-phospho-alpha-D-ribose 1-diphosphate biosynthesis; 5-phospho-alpha-D-ribose 1-diphosphate from D-ribose 5-phosphate (route II): step 3/3. Its function is as follows. Catalyzes the phosphorylation of ribose 1,5-bisphosphate to 5-phospho-D-ribosyl alpha-1-diphosphate (PRPP). The polypeptide is Ribose 1,5-bisphosphate phosphokinase PhnN (Rhodopseudomonas palustris (strain ATCC BAA-98 / CGA009)).